We begin with the raw amino-acid sequence, 153 residues long: Catabolic 3-dehydroquinase (153 aa).

Tyr-24 acts as the Proton acceptor in catalysis. Positions 75, 81, and 88 each coordinate substrate. His-101 functions as the Proton donor in the catalytic mechanism. Substrate-binding positions include 102-103 (VS) and Arg-112.

This sequence belongs to the type-II 3-dehydroquinase family. As to quaternary structure, homododecamer. Adopts a ring-like structure, composed of an arrangement of two hexameric rings stacked on top of one another.

The catalysed reaction is 3-dehydroquinate = 3-dehydroshikimate + H2O. Its pathway is aromatic compound metabolism; 3,4-dihydroxybenzoate biosynthesis; 3,4-dihydroxybenzoate from 3-dehydroquinate: step 1/2. Its function is as follows. Is involved in the catabolism of quinate. Allows the utilization of quinate as carbon source via the beta-ketoadipate pathway. The chain is Catabolic 3-dehydroquinase from Aspergillus oryzae (strain ATCC 42149 / RIB 40) (Yellow koji mold).